The following is a 500-amino-acid chain: Maturase K (500 aa).

This sequence belongs to the intron maturase 2 family. MatK subfamily.

It is found in the plastid. The protein resides in the chloroplast. Its function is as follows. Usually encoded in the trnK tRNA gene intron. Probably assists in splicing its own and other chloroplast group II introns. The protein is Maturase K of Proboscidea louisianica (Louisiana Devil's-claw).